We begin with the raw amino-acid sequence, 303 residues long: Formylglycine-generating enzyme (303 aa).

N188, I189, D202, Y204, N222, V223, G225, and V227 together coordinate Ca(2+). Cu(+) is bound by residues C269 and C274.

Belongs to the sulfatase-modifying factor family. Requires Cu(+) as cofactor.

The enzyme catalyses L-cysteinyl-[sulfatase] + 2 a thiol + O2 = an organic disulfide + 3-oxo-L-alanyl-[sulfatase] + hydrogen sulfide + H2O + H(+). It participates in protein modification; sulfatase oxidation. In terms of biological role, oxidase that catalyzes the conversion of cysteine to 3-oxoalanine on target proteins. 3-oxoalanine modification, which is also named formylglycine (fGly), occurs in the maturation of arylsulfatases and some alkaline phosphatases that use the hydrated form of 3-oxoalanine as a catalytic nucleophile. The protein is Formylglycine-generating enzyme of Thermomonospora curvata (strain ATCC 19995 / DSM 43183 / JCM 3096 / KCTC 9072 / NBRC 15933 / NCIMB 10081 / Henssen B9).